A 983-amino-acid chain; its full sequence is Next to BRCA1 gene 1 protein (983 aa).

One can recognise a PB1 domain in the interval 4–86 (QVTLNVTFKN…NQLQMQVHEG (83 aa)). A Phosphoserine modification is found at serine 117. Residues 126 to 149 (MKTTEEPTAEARSPVPCDTDKPQD) are disordered. A ZZ-type zinc finger spans residues 214 to 266 (SWHIACSHCQKRIVGVRYQCSLCPSYNICEDCEAGPYSHDTNHILLKFRRPVV). Residues cysteine 219, cysteine 222, cysteine 233, cysteine 236, cysteine 242, cysteine 245, histidine 252, and histidine 256 each contribute to the Zn(2+) site. ATG8 family proteins-binding regions lie at residues 544 to 638 (ASER…PASV) and 745 to 756 (ASSEDYIIILPE). Phosphothreonine is present on threonine 588. Phosphoserine occurs at positions 592 and 598. A disordered region spans residues 611–645 (EESEGAGLKASPDSTVLTKRKAETPASVEETEEDL). The interval 768 to 813 (MYSSALSQPGLERGAEGEPGIESGQEPAEARERLPERESQPKEQSI) is disordered. Positions 795–808 (AEARERLPERESQP) are enriched in basic and acidic residues. Serine 855 carries the phosphoserine modification. A disordered region spans residues 867–894 (DHVRGEPRGSTGLANSRQKSCDHSRHHN). Residues 930-974 (SEDQTAALMAHLFEMGFCDRQLNLRLLRKHNHNILQVVTELLQVN) enclose the UBA domain.

As to quaternary structure, homooligomer and heterooligomer. Interacts with TRIM55. Interacts with titin/TTN. Interacts with RNF29, USP8, MAP1LC3A, MAP1LC3B, MAP1LC3C, GABARAP, GABARAPL1 and GABARAPL2. Binds to ubiquitin and ubiquitinated proteins. Interacts with SQSTM1. Interacts with TAX1BP1. Interacts with IRF3; this interaction mediates autophagic degradation of IRF3. Interacts with IL12A and IL12B. Post-translationally, phosphorylated by GSK3A; this phosphorylation inhibits NBR1 involvement in the formation of ubiquitinated protein aggregates.

Its subcellular location is the cytoplasm. The protein localises to the cytoplasmic vesicle. It localises to the autophagosome. The protein resides in the lysosome. It is found in the myofibril. Its subcellular location is the sarcomere. The protein localises to the m line. Ubiquitin-binding autophagy adapter that participates in different processes including host defense or intracellular homeostasis. Possesses a double function during the selective autophagy by acting as a shuttle bringing ubiquitinated proteins to autophagosomes and also by participating in the formation of protein aggregates. Plays a role in the regulation of the innate immune response by modulating type I interferon production and targeting ubiquitinated IRF3 for autophagic degradation. In response to oxidative stress, promotes an increase in SQSTM1 levels, phosphorylation, and body formation by preventing its autophagic degradation. In turn, activates the KEAP1-NRF2/NFE2L2 antioxidant pathway. Also plays non-autophagy role by mediating the shuttle of IL-12 to late endosome for subsequent secretion. In Rattus norvegicus (Rat), this protein is Next to BRCA1 gene 1 protein (Nbr1).